A 119-amino-acid chain; its full sequence is E3 ubiquitin-protein ligase PPP1R11 (119 aa).

The segment at 1–42 is disordered; the sequence is MAESSGPTAGGGATSSTVTTESDTQPEHRSLTLKLRKRKPDK. 2 atypical RING finger domain regions span residues 55-65 and 87-96; these read NLGRRSSKCCC and CESAHCIRGH. Positions 96 to 119 are disordered; sequence HKKATSGSKETPSSHHDKTGSMQH. Residues 107 to 119 are compositionally biased toward basic and acidic residues; that stretch reads PSSHHDKTGSMQH.

The enzyme catalyses S-ubiquitinyl-[E2 ubiquitin-conjugating enzyme]-L-cysteine + [acceptor protein]-L-lysine = [E2 ubiquitin-conjugating enzyme]-L-cysteine + N(6)-ubiquitinyl-[acceptor protein]-L-lysine.. The protein operates within protein modification; protein ubiquitination. Its function is as follows. Atypical E3 ubiquitin-protein ligase which ubiquitinates TLR2 at 'Lys-754' leading to its degradation by the proteasome. Inhibitor of protein phosphatase 1. In Xenopus tropicalis (Western clawed frog), this protein is E3 ubiquitin-protein ligase PPP1R11 (ppp1r11).